A 39-amino-acid polypeptide reads, in one-letter code: Cytochrome b559 subunit beta (39 aa).

A helical membrane pass occupies residues 14 to 30; it reads WLAVHGLAVPTVSFLGS. Residue His18 coordinates heme.

It belongs to the PsbE/PsbF family. As to quaternary structure, heterodimer of an alpha subunit and a beta subunit. PSII is composed of 1 copy each of membrane proteins PsbA, PsbB, PsbC, PsbD, PsbE, PsbF, PsbH, PsbI, PsbJ, PsbK, PsbL, PsbM, PsbT, PsbX, PsbY, PsbZ, Psb30/Ycf12, at least 3 peripheral proteins of the oxygen-evolving complex and a large number of cofactors. It forms dimeric complexes. The cofactor is heme b.

It localises to the plastid. Its subcellular location is the chloroplast thylakoid membrane. This b-type cytochrome is tightly associated with the reaction center of photosystem II (PSII). PSII is a light-driven water:plastoquinone oxidoreductase that uses light energy to abstract electrons from H(2)O, generating O(2) and a proton gradient subsequently used for ATP formation. It consists of a core antenna complex that captures photons, and an electron transfer chain that converts photonic excitation into a charge separation. The chain is Cytochrome b559 subunit beta from Muilla maritima (Sea muilla).